The primary structure comprises 216 residues: MIITIDGPSGTGKSTTAKALADHLHFNYCNTGKMYRTLAYARLQSPWATLPLTKFLEEPPFSFTFATGQPLESFFNGHLLTSELTTQEVANAASELSQLPEVRAFMQDLQRRYAQLGNCVFEGRDMGSKVFPNADLKIFLTSSPEVRAQRRLKDLPEGTLSPEQLQAELVKRDAADAQRAHDPLVIPENGIVIDSSDLTIRQVLEKILALLFRNEL.

Position 7–15 (7–15 (GPSGTGKST)) interacts with ATP.

The protein belongs to the cytidylate kinase family. Type 1 subfamily.

Its subcellular location is the cytoplasm. The enzyme catalyses CMP + ATP = CDP + ADP. It catalyses the reaction dCMP + ATP = dCDP + ADP. The sequence is that of Cytidylate kinase from Chlamydia pneumoniae (Chlamydophila pneumoniae).